Here is a 242-residue protein sequence, read N- to C-terminus: MKILIPTAKEMNTDLPSIEATPLKPESQAVLDALALYSASQLESFYKVSAEKATEEFQNIQALKRQTAQHYPALKLFDGLMYRNIKRDKLTEAEQDYLENHVFITSALYGVVPALSPMAPHRLDFLMKLKVAGKTLKSHWKAVYDEALKKEEVIFSLLSSEFETVFSKEIRAKMVTFKFMEDRGGQLKIHSTISKKARGAFLTALIENQVQTVGEARRLNFAGFVYREDLSQPQGLVFVKEV.

It belongs to the UPF0246 family.

This chain is UPF0246 protein SPCG_1533, found in Streptococcus pneumoniae (strain CGSP14).